A 346-amino-acid polypeptide reads, in one-letter code: Aspartate-semialdehyde dehydrogenase (346 aa).

Residues 12 to 15 (SGAV) and 40 to 41 (RS) contribute to the NADP(+) site. R101 provides a ligand contact to phosphate. C131 serves as the catalytic Acyl-thioester intermediate. Q158 serves as a coordination point for substrate. Position 161-162 (161-162 (SG)) interacts with NADP(+). K225 is a phosphate binding site. A substrate-binding site is contributed by R246. The active-site Proton acceptor is the H253. Residue Q326 participates in NADP(+) binding.

This sequence belongs to the aspartate-semialdehyde dehydrogenase family. Homodimer.

The catalysed reaction is L-aspartate 4-semialdehyde + phosphate + NADP(+) = 4-phospho-L-aspartate + NADPH + H(+). It participates in amino-acid biosynthesis; L-lysine biosynthesis via DAP pathway; (S)-tetrahydrodipicolinate from L-aspartate: step 2/4. Its pathway is amino-acid biosynthesis; L-methionine biosynthesis via de novo pathway; L-homoserine from L-aspartate: step 2/3. It functions in the pathway amino-acid biosynthesis; L-threonine biosynthesis; L-threonine from L-aspartate: step 2/5. Its function is as follows. Catalyzes the NADPH-dependent formation of L-aspartate-semialdehyde (L-ASA) by the reductive dephosphorylation of L-aspartyl-4-phosphate. The protein is Aspartate-semialdehyde dehydrogenase of Helicobacter pylori (strain ATCC 700392 / 26695) (Campylobacter pylori).